We begin with the raw amino-acid sequence, 581 residues long: Mitosis inhibitor protein kinase mik1 (581 aa).

Disordered stretches follow at residues 43–71 and 148–178; these read GHEE…HTPM and NLTN…PLSP. Residues 59-71 are compositionally biased toward polar residues; that stretch reads KPSNTKRSPHTPM. Over residues 160–169 the composition is skewed to basic residues; the sequence is PCKKGTKIKL. A Protein kinase domain is found at 289–561; sequence FQQVKPIHES…LLAMPEMIFI (273 aa). ATP is bound by residues 295–303 and lysine 320; that span reads IHESDFSFV. Aspartate 417 serves as the catalytic Proton acceptor. Mg(2+)-binding residues include asparagine 422 and aspartate 435.

This sequence belongs to the protein kinase superfamily. Ser/Thr protein kinase family. WEE1 subfamily.

The enzyme catalyses L-seryl-[protein] + ATP = O-phospho-L-seryl-[protein] + ADP + H(+). It carries out the reaction L-threonyl-[protein] + ATP = O-phospho-L-threonyl-[protein] + ADP + H(+). Functionally, protein kinase that acts both on serines and on tyrosines. It acts as a negative regulator of entry into mitosis (G2 to M transition). Phosphorylates and inhibits cdc2. The sequence is that of Mitosis inhibitor protein kinase mik1 (mik1) from Schizosaccharomyces pombe (strain 972 / ATCC 24843) (Fission yeast).